A 311-amino-acid chain; its full sequence is Malate dehydrogenase (311 aa).

NAD(+)-binding positions include 7 to 13 (GAAGGIG) and aspartate 34. 2 residues coordinate substrate: arginine 81 and arginine 87. Residues asparagine 94 and 117 to 119 (ITN) each bind NAD(+). The substrate site is built by asparagine 119 and arginine 153. Histidine 177 acts as the Proton acceptor in catalysis. Methionine 227 is a binding site for NAD(+).

It belongs to the LDH/MDH superfamily. MDH type 1 family. As to quaternary structure, homodimer.

It carries out the reaction (S)-malate + NAD(+) = oxaloacetate + NADH + H(+). Its function is as follows. Catalyzes the reversible oxidation of malate to oxaloacetate. This chain is Malate dehydrogenase, found in Shewanella baltica (strain OS223).